A 325-amino-acid chain; its full sequence is MLLPETPALLALRQAVRAWTVAFEPRRRVVVALSGGADSLALTAAAVAETDSVDALIVDHRLQPGSDAVARSAADQALALGCRTATVLTVDVAEGGSLEAAAREARYSALRDARTDLPVLLGHTLDDQAETVLLGLSRGSGGRSIQGMAAFDAPWGRPLLGIRRSVTRAACVDLGITPWEDPHNNNPEFTRVRLRHEALPLLEEILGGGVAEALARTATQLREDGEALDEYAEALLLRAVVDGEVEVDTLAEAPTAIRRRALRAWLLQGGAKALTDKQLRAVDALVIDWRGQGGVAIGGGTPEARLVAARRRGRLILGFEDRRRV.

An ATP-binding site is contributed by 34–39 (SGGADS).

Belongs to the tRNA(Ile)-lysidine synthase family.

It is found in the cytoplasm. It carries out the reaction cytidine(34) in tRNA(Ile2) + L-lysine + ATP = lysidine(34) in tRNA(Ile2) + AMP + diphosphate + H(+). In terms of biological role, ligates lysine onto the cytidine present at position 34 of the AUA codon-specific tRNA(Ile) that contains the anticodon CAU, in an ATP-dependent manner. Cytidine is converted to lysidine, thus changing the amino acid specificity of the tRNA from methionine to isoleucine. The chain is tRNA(Ile)-lysidine synthase from Rhodococcus erythropolis (strain PR4 / NBRC 100887).